The primary structure comprises 268 residues: MTHEYPDGTCAVCGLSLRVKEGESVVVLGPNGSGKTTLLHHILGLLTPTKGHIRVLGHDLPDGVREVRKRIGVVFQDVDDQLIMPTVLEDVAFGLVNRGMPREEAFERAREILERLGIEDLEDRPPQFLSGGQKRLVALAGAVAPEPDLLILDEPTSGLDFRATRLFVRLIRELKEELGFTMILTTFDVDIAAALAERVVVIREGKTVAEGSPEDILTDVDLIRESGLKPPEHVELLRRLGIENPPLDISEAEELLVAMLGEESRGNP.

Residues 1–229 form the ABC transporter domain; it reads MTHEYPDGTC…VDLIRESGLK (229 aa). 29 to 36 serves as a coordination point for ATP; it reads GPNGSGKT.

The protein belongs to the ABC transporter superfamily.

It localises to the cell membrane. Its function is as follows. Probably part of an ABC transporter complex. Responsible for energy coupling to the transport system. This Methanopyrus kandleri (strain AV19 / DSM 6324 / JCM 9639 / NBRC 100938) protein is Putative ABC transporter ATP-binding protein MK0182.